The chain runs to 400 residues: Probable glucan endo-1,6-beta-glucosidase B (400 aa).

The N-terminal stretch at 1–17 (MIRRLAALSALSGLATA) is a signal peptide. N-linked (GlcNAc...) asparagine glycosylation occurs at asparagine 30. Glutamate 219 functions as the Proton donor in the catalytic mechanism. N-linked (GlcNAc...) asparagine glycosylation occurs at asparagine 272. Glutamate 320 functions as the Nucleophile in the catalytic mechanism.

Belongs to the glycosyl hydrolase 5 (cellulase A) family.

It localises to the secreted. It catalyses the reaction Random hydrolysis of (1-&gt;6)-linkages in (1-&gt;6)-beta-D-glucans.. In terms of biological role, beta-glucanases participate in the metabolism of beta-glucan, the main structural component of the cell wall. Acts on lutean, pustulan and 1,6-oligo-beta-D-glucosides. This Neosartorya fischeri (strain ATCC 1020 / DSM 3700 / CBS 544.65 / FGSC A1164 / JCM 1740 / NRRL 181 / WB 181) (Aspergillus fischerianus) protein is Probable glucan endo-1,6-beta-glucosidase B (exgB).